Here is a 69-residue protein sequence, read N- to C-terminus: Putative membrane protein insertion efficiency factor (69 aa).

The protein belongs to the UPF0161 family.

Its subcellular location is the cell membrane. In terms of biological role, could be involved in insertion of integral membrane proteins into the membrane. This Clostridium botulinum (strain ATCC 19397 / Type A) protein is Putative membrane protein insertion efficiency factor.